The following is a 448-amino-acid chain: Chaperone SurA (448 aa).

Residues 1-27 (MKKTLRFAAVAAGLVASLITVAPSASA) form the signal peptide. 2 PpiC domains span residues 185–288 (QQDL…RLVD) and 301–399 (IVQT…QVLG). A disordered region spans residues 230-249 (LAKSQSEADDAKKGGDLGFK).

Its subcellular location is the periplasm. It catalyses the reaction [protein]-peptidylproline (omega=180) = [protein]-peptidylproline (omega=0). Its function is as follows. Chaperone involved in the correct folding and assembly of outer membrane proteins. Recognizes specific patterns of aromatic residues and the orientation of their side chains, which are found more frequently in integral outer membrane proteins. May act in both early periplasmic and late outer membrane-associated steps of protein maturation. This is Chaperone SurA from Burkholderia thailandensis (strain ATCC 700388 / DSM 13276 / CCUG 48851 / CIP 106301 / E264).